Here is a 61-residue protein sequence, read N- to C-terminus: Small ribosomal subunit protein uS14 (61 aa).

4 residues coordinate Zn(2+): Cys24, Cys27, Cys40, and Cys43.

This sequence belongs to the universal ribosomal protein uS14 family. Zinc-binding uS14 subfamily. Part of the 30S ribosomal subunit. Contacts proteins S3 and S10. Zn(2+) serves as cofactor.

Functionally, binds 16S rRNA, required for the assembly of 30S particles and may also be responsible for determining the conformation of the 16S rRNA at the A site. The sequence is that of Small ribosomal subunit protein uS14 from Treponema denticola (strain ATCC 35405 / DSM 14222 / CIP 103919 / JCM 8153 / KCTC 15104).